A 965-amino-acid chain; its full sequence is Forespore membrane adapter protein MUG56 (965 aa).

Residues 70–175 form a disordered region; the sequence is SFLMHKSTDE…VQNSNSTSTS (106 aa). Residues 82–101 show a composition bias toward polar residues; that stretch reads DTPSNLDSPSTQNVGSTNNT. Over residues 102–114 the composition is skewed to low complexity; that stretch reads RASQSLLRRSSSF. Positions 124 to 158 are enriched in polar residues; the sequence is THASTDNNPFSESSTLQPQTAERTSQQAVRSAITE. Positions 159–175 are enriched in low complexity; sequence TTNPSVSVQNSNSTSTS. PH domains lie at 562–737 and 800–961; these read PTPV…EVAS and VIRM…KEIN.

Belongs to the SPO71 family.

The protein resides in the cytoplasm. It localises to the nucleus. Its subcellular location is the prospore membrane. In terms of biological role, may recruit a lipid transfer protein to the forespore membrane during sporulation, thereby aiding forespore membrane formation. Required for meiosis. In Schizosaccharomyces pombe (strain 972 / ATCC 24843) (Fission yeast), this protein is Forespore membrane adapter protein MUG56.